The chain runs to 356 residues: MRFDLERPSQNATSHRVAVLLINLGTPDAPTPRAVRRYLAQFLSDPRVVEIPALLWQIILRLLILPFRGSASAKKYAAVWMPEGSPLRVYTEKQVEGLRHLLQLNDYTVLVDYAMRYGTPGIPAMLNQLKLAGAERVLLMPMYPQYSSSTTATAFDDAFSALKRMRNQPEIRTVRQYADHPAYIAALAAQVHQYWHQHGRPDFAAGDKLVLSFHGVPKRTLDLGDPYHEQCQQTGALLMQALELTPVECRITFQSRFGKAEWLQPYTAPTLKELGAAGVRRADVFCPGFTADCLETIEEIGMEVRDEFLHAGGKDFHRIPCLNASQAWIAALGEIVAQNLQGWPVQALPVPHTTGA.

His-214 and Glu-295 together coordinate Fe cation.

The protein belongs to the ferrochelatase family.

It is found in the cytoplasm. It catalyses the reaction heme b + 2 H(+) = protoporphyrin IX + Fe(2+). Its pathway is porphyrin-containing compound metabolism; protoheme biosynthesis; protoheme from protoporphyrin-IX: step 1/1. Catalyzes the ferrous insertion into protoporphyrin IX. The polypeptide is Ferrochelatase (Paraburkholderia xenovorans (strain LB400)).